The following is a 490-amino-acid chain: tRNA-guanine(15) transglycosylase (490 aa).

Aspartate 90 acts as the Nucleophile in catalysis. Substrate contacts are provided by aspartate 125 and alanine 193. Residues cysteine 276, cysteine 278, and cysteine 281 each contribute to the Zn(2+) site.

Belongs to the archaeosine tRNA-ribosyltransferase family. The cofactor is Zn(2+).

The catalysed reaction is guanosine(15) in tRNA + 7-cyano-7-deazaguanine = 7-cyano-7-carbaguanosine(15) in tRNA + guanine. Its pathway is tRNA modification; archaeosine-tRNA biosynthesis. Functionally, exchanges the guanine residue with 7-cyano-7-deazaguanine (preQ0) at position 15 in the dihydrouridine loop (D-loop) of archaeal tRNAs. This is tRNA-guanine(15) transglycosylase from Methanosarcina mazei (strain ATCC BAA-159 / DSM 3647 / Goe1 / Go1 / JCM 11833 / OCM 88) (Methanosarcina frisia).